A 215-amino-acid polypeptide reads, in one-letter code: ATP phosphoribosyltransferase (215 aa).

The protein belongs to the ATP phosphoribosyltransferase family. Short subfamily. As to quaternary structure, heteromultimer composed of HisG and HisZ subunits.

It is found in the cytoplasm. The catalysed reaction is 1-(5-phospho-beta-D-ribosyl)-ATP + diphosphate = 5-phospho-alpha-D-ribose 1-diphosphate + ATP. It functions in the pathway amino-acid biosynthesis; L-histidine biosynthesis; L-histidine from 5-phospho-alpha-D-ribose 1-diphosphate: step 1/9. Its function is as follows. Catalyzes the condensation of ATP and 5-phosphoribose 1-diphosphate to form N'-(5'-phosphoribosyl)-ATP (PR-ATP). Has a crucial role in the pathway because the rate of histidine biosynthesis seems to be controlled primarily by regulation of HisG enzymatic activity. The polypeptide is ATP phosphoribosyltransferase (Prochlorococcus marinus (strain MIT 9215)).